The following is a 238-amino-acid chain: Orotidine 5'-phosphate decarboxylase (238 aa).

Substrate contacts are provided by residues Asp10, Lys32, Asp59–Thr68, Thr122, Arg184, Gln193, Gly213, and Arg214. Residue Lys61 is the Proton donor of the active site.

It belongs to the OMP decarboxylase family. Type 1 subfamily. In terms of assembly, homodimer.

The enzyme catalyses orotidine 5'-phosphate + H(+) = UMP + CO2. The protein operates within pyrimidine metabolism; UMP biosynthesis via de novo pathway; UMP from orotate: step 2/2. Catalyzes the decarboxylation of orotidine 5'-monophosphate (OMP) to uridine 5'-monophosphate (UMP). This chain is Orotidine 5'-phosphate decarboxylase, found in Bacillus cereus (strain ZK / E33L).